The chain runs to 551 residues: ATP-dependent DNA helicase XPD (551 aa).

One can recognise a Helicase ATP-binding domain in the interval 1 to 228; that stretch reads MLKLRDWQEK…KLLNQLREVV (228 aa). 29 to 36 contacts ATP; sequence APTGSGKT. C88, C102, C105, and C137 together coordinate [4Fe-4S] cluster. The short motif at 180–183 is the DEAH box element; that stretch reads DEAH.

It belongs to the helicase family. RAD3/XPD subfamily. As to quaternary structure, monomer. [4Fe-4S] cluster is required as a cofactor.

The catalysed reaction is Couples ATP hydrolysis with the unwinding of duplex DNA at the replication fork by translocating in the 5'-3' direction. This creates two antiparallel DNA single strands (ssDNA). The leading ssDNA polymer is the template for DNA polymerase III holoenzyme which synthesizes a continuous strand.. It catalyses the reaction ATP + H2O = ADP + phosphate + H(+). Its function is as follows. ATP-dependent 5'-3' DNA helicase. Thought to be involved in nucleotide excision repair (NER) of DNA. The polypeptide is ATP-dependent DNA helicase XPD (Sulfolobus acidocaldarius (strain ATCC 33909 / DSM 639 / JCM 8929 / NBRC 15157 / NCIMB 11770)).